The following is a 428-amino-acid chain: Adenylosuccinate synthetase (428 aa).

GTP contacts are provided by residues 12–18 and 40–42; these read GDEGKGK and GHT. The active-site Proton acceptor is Asp13. 2 residues coordinate Mg(2+): Asp13 and Gly40. IMP-binding positions include 13 to 16, 38 to 41, Thr130, Arg144, Gln225, Thr240, and Arg304; these read DEGK and NAGH. Residue His41 is the Proton donor of the active site. Residue 300–306 coordinates substrate; that stretch reads VTTGRAR. Residues Arg306, 332–334, and 414–416 contribute to the GTP site; these read KID and SVG.

The protein belongs to the adenylosuccinate synthetase family. Homodimer. Mg(2+) serves as cofactor.

It is found in the cytoplasm. It carries out the reaction IMP + L-aspartate + GTP = N(6)-(1,2-dicarboxyethyl)-AMP + GDP + phosphate + 2 H(+). It functions in the pathway purine metabolism; AMP biosynthesis via de novo pathway; AMP from IMP: step 1/2. Its function is as follows. Plays an important role in the de novo pathway of purine nucleotide biosynthesis. Catalyzes the first committed step in the biosynthesis of AMP from IMP. The polypeptide is Adenylosuccinate synthetase (Clostridium botulinum (strain Loch Maree / Type A3)).